Reading from the N-terminus, the 126-residue chain is Small ribosomal subunit protein uS13 (126 aa).

Residues 96–126 (PVRGQRTRTNARTRRGSRRTVAGKKKPAAKK) are disordered. Basic residues predominate over residues 100–126 (QRTRTNARTRRGSRRTVAGKKKPAAKK).

This sequence belongs to the universal ribosomal protein uS13 family. Part of the 30S ribosomal subunit. Forms a loose heterodimer with protein S19. Forms two bridges to the 50S subunit in the 70S ribosome.

Its function is as follows. Located at the top of the head of the 30S subunit, it contacts several helices of the 16S rRNA. In the 70S ribosome it contacts the 23S rRNA (bridge B1a) and protein L5 of the 50S subunit (bridge B1b), connecting the 2 subunits; these bridges are implicated in subunit movement. Contacts the tRNAs in the A and P-sites. This chain is Small ribosomal subunit protein uS13, found in Thermosynechococcus vestitus (strain NIES-2133 / IAM M-273 / BP-1).